Consider the following 378-residue polypeptide: Chaperone protein DnaJ 2 (378 aa).

The J domain maps to Asp-4 to Gly-68. A CR-type zinc finger spans residues Gly-130–Arg-212. Zn(2+) contacts are provided by Cys-143, Cys-146, Cys-160, Cys-163, Cys-186, Cys-189, Cys-200, and Cys-203. CXXCXGXG motif repeat units follow at residues Cys-143 to Gly-150, Cys-160 to Gly-167, Cys-186 to Gly-193, and Cys-200 to Gly-207. 2 disordered regions span residues Arg-297–Gly-319 and Arg-351–Arg-378. A compositionally biased stretch (polar residues) spans Gly-358–Leu-367.

It belongs to the DnaJ family. As to quaternary structure, homodimer. Zn(2+) is required as a cofactor.

The protein resides in the cytoplasm. Its function is as follows. Participates actively in the response to hyperosmotic and heat shock by preventing the aggregation of stress-denatured proteins and by disaggregating proteins, also in an autonomous, DnaK-independent fashion. Unfolded proteins bind initially to DnaJ; upon interaction with the DnaJ-bound protein, DnaK hydrolyzes its bound ATP, resulting in the formation of a stable complex. GrpE releases ADP from DnaK; ATP binding to DnaK triggers the release of the substrate protein, thus completing the reaction cycle. Several rounds of ATP-dependent interactions between DnaJ, DnaK and GrpE are required for fully efficient folding. Also involved, together with DnaK and GrpE, in the DNA replication of plasmids through activation of initiation proteins. This chain is Chaperone protein DnaJ 2, found in Streptomyces coelicolor (strain ATCC BAA-471 / A3(2) / M145).